A 304-amino-acid chain; its full sequence is Acetylglutamate kinase (304 aa).

Residues 72–73, arginine 94, and asparagine 199 each bind substrate; that span reads GG.

Belongs to the acetylglutamate kinase family. ArgB subfamily.

It localises to the cytoplasm. The enzyme catalyses N-acetyl-L-glutamate + ATP = N-acetyl-L-glutamyl 5-phosphate + ADP. Its pathway is amino-acid biosynthesis; L-arginine biosynthesis; N(2)-acetyl-L-ornithine from L-glutamate: step 2/4. Its function is as follows. Catalyzes the ATP-dependent phosphorylation of N-acetyl-L-glutamate. The protein is Acetylglutamate kinase of Methylobacterium nodulans (strain LMG 21967 / CNCM I-2342 / ORS 2060).